The primary structure comprises 334 residues: Phosphate acyltransferase (334 aa).

This sequence belongs to the PlsX family. In terms of assembly, homodimer. Probably interacts with PlsY.

The protein resides in the cytoplasm. It carries out the reaction a fatty acyl-[ACP] + phosphate = an acyl phosphate + holo-[ACP]. The protein operates within lipid metabolism; phospholipid metabolism. Functionally, catalyzes the reversible formation of acyl-phosphate (acyl-PO(4)) from acyl-[acyl-carrier-protein] (acyl-ACP). This enzyme utilizes acyl-ACP as fatty acyl donor, but not acyl-CoA. The chain is Phosphate acyltransferase from Fervidobacterium nodosum (strain ATCC 35602 / DSM 5306 / Rt17-B1).